A 509-amino-acid polypeptide reads, in one-letter code: Cobyric acid synthase (509 aa).

Positions 262 to 459 constitute a GATase cobBQ-type domain; it reads EIKVGIIKLP…IHGIFENDSW (198 aa). Cys343 (nucleophile) is an active-site residue. His451 is an active-site residue.

This sequence belongs to the CobB/CobQ family. CobQ subfamily.

It participates in cofactor biosynthesis; adenosylcobalamin biosynthesis. Catalyzes amidations at positions B, D, E, and G on adenosylcobyrinic A,C-diamide. NH(2) groups are provided by glutamine, and one molecule of ATP is hydrogenolyzed for each amidation. The polypeptide is Cobyric acid synthase (Prochlorococcus marinus (strain MIT 9215)).